Reading from the N-terminus, the 316-residue chain is Small ribosomal subunit biogenesis GTPase RsgA (316 aa).

One can recognise a CP-type G domain in the interval aspartate 83 to phenylalanine 248. GTP contacts are provided by residues asparagine 131–aspartate 134 and glycine 185–threonine 193. Positions 272, 277, 279, and 285 each coordinate Zn(2+).

The protein belongs to the TRAFAC class YlqF/YawG GTPase family. RsgA subfamily. As to quaternary structure, monomer. Associates with 30S ribosomal subunit, binds 16S rRNA. Zn(2+) serves as cofactor.

It localises to the cytoplasm. Functionally, one of several proteins that assist in the late maturation steps of the functional core of the 30S ribosomal subunit. Helps release RbfA from mature subunits. May play a role in the assembly of ribosomal proteins into the subunit. Circularly permuted GTPase that catalyzes slow GTP hydrolysis, GTPase activity is stimulated by the 30S ribosomal subunit. In Paraburkholderia xenovorans (strain LB400), this protein is Small ribosomal subunit biogenesis GTPase RsgA.